Reading from the N-terminus, the 359-residue chain is 3-dehydroquinate synthase (359 aa).

NAD(+) contacts are provided by residues 71 to 76 (DGEQFK), 105 to 109 (GVIGD), 129 to 130 (TT), Lys-142, Lys-151, and 169 to 172 (CLQT). Zn(2+)-binding residues include Glu-184, His-247, and His-264.

The protein belongs to the sugar phosphate cyclases superfamily. Dehydroquinate synthase family. The cofactor is Co(2+). It depends on Zn(2+) as a cofactor. Requires NAD(+) as cofactor.

The protein localises to the cytoplasm. It catalyses the reaction 7-phospho-2-dehydro-3-deoxy-D-arabino-heptonate = 3-dehydroquinate + phosphate. Its pathway is metabolic intermediate biosynthesis; chorismate biosynthesis; chorismate from D-erythrose 4-phosphate and phosphoenolpyruvate: step 2/7. Its function is as follows. Catalyzes the conversion of 3-deoxy-D-arabino-heptulosonate 7-phosphate (DAHP) to dehydroquinate (DHQ). This Shewanella sp. (strain MR-4) protein is 3-dehydroquinate synthase.